The sequence spans 287 residues: Protease HtpX (287 aa).

The next 2 membrane-spanning stretches (helical) occupy residues 4 to 24 (IFLL…VMSI) and 33 to 53 (GGLL…SLAI). H139 provides a ligand contact to Zn(2+). The active site involves E140. H143 provides a ligand contact to Zn(2+). The next 2 membrane-spanning stretches (helical) occupy residues 154–174 (LIQG…AGII) and 195–215 (AVVF…VAYF). E220 lines the Zn(2+) pocket.

It belongs to the peptidase M48B family. Zn(2+) is required as a cofactor.

The protein localises to the cell inner membrane. The polypeptide is Protease HtpX (Shewanella frigidimarina (strain NCIMB 400)).